The primary structure comprises 580 residues: Cis-3-hydroxy-L-proline dehydratase (580 aa).

Serine 66 functions as the Proton acceptor in the catalytic mechanism.

This sequence belongs to the AcnX family. Monomer. Requires Fe(3+) as cofactor.

It catalyses the reaction cis-3-hydroxy-L-proline = 1-pyrroline-2-carboxylate + H2O. Inhibited by Zn(2+), Cd(2+) and Hg(2+), but not by Co(2+), Ni(2+), Mn(2+), Sr(2+), Mg(2+), or Fe(3+). Inhibited by pyrrole-2-carboxylate and its derivative 2-thiophenecarboxylate, but not by trans-aconitate, fluorocitrate and oxalomalate, which are typical inhibitors of the aconitase enzymes. Catalyzes the dehydration of cis-3-hydroxy-L-proline (c3LHyp) to Delta(1)-pyrroline-2-carboxylate (Pyr2C). Also has activity with (2S,3S,4R)-3,4-dihydroxyproline as substrate, albeit at about 300-fold lower rate. No activity with L-proline, trans-4-hydroxy-L-proline (t4LHyp), cis-4-hydroxy-L-proline (c4LHyp), trans-3-hydroxy-L-proline (t3LHyp), D-proline, cis-4-hydroxy-D-proline (c4DHyp), trans-4-hydroxy-D-proline (t4DHyp) or L-serine as substrates. No hydro-lyase activity with citrate or cis-acotinate. Does not catalyze 2-epimerization of c3LHyp to trans-3-hydroxy-D-proline (t3DHyp). Involved in a degradation pathway that converts c3LHyp to L-proline, which would allow P.aeruginosa to grow on c3LHyp as a sole carbon source. The chain is Cis-3-hydroxy-L-proline dehydratase from Pseudomonas aeruginosa (strain ATCC 15692 / DSM 22644 / CIP 104116 / JCM 14847 / LMG 12228 / 1C / PRS 101 / PAO1).